The sequence spans 2089 residues: Mediator of DNA damage checkpoint protein 1 (2089 aa).

The span at 1 to 19 (MEDTQAIDWDVEEEEETEQ) shows a compositional bias: acidic residues. The interval 1–22 (MEDTQAIDWDVEEEEETEQSSE) is disordered. An interaction with CHEK2 region spans residues 1–150 (MEDTQAIDWD…SRGPLTVEET (150 aa)). Residues 2-220 (EDTQAIDWDV…PFAFNLNSDT (219 aa)) are interaction with the MRN complex. T4 carries the post-translational modification Phosphothreonine; by ATM. The FHA domain occupies 54 to 105 (NVVGRMPDCSVALPFPSISKQHAEIEILAWDKAPILRDCGSLNGTQILRPPK). S108 carries the post-translational modification Phosphoserine. A required for nuclear localization (NLS1) region spans residues 145–568 (LTVEETPRVQ…PAKLLVVSLE (424 aa)). T146 bears the Phosphothreonine mark. S168 is modified (phosphoserine; by CK2). S176 carries the post-translational modification Phosphoserine. 3 disordered regions span residues 185 to 248 (RTTS…AKQS), 261 to 280 (DQPL…GAGN), and 286 to 317 (GVIL…AEVH). S196 and S218 each carry phosphoserine; by CK2. T220 is modified (phosphothreonine; by CK2). Over residues 261–274 (DQPLVKERDNDTKV) the composition is skewed to basic and acidic residues. Residue S299 is modified to Phosphoserine; by CK2. The residue at position 301 (T301) is a Phosphothreonine; by CK2. Residues 306–317 (DSRPPGRPAEVH) show a composition bias toward basic and acidic residues. A Phosphoserine; by CK2 modification is found at S329. Phosphothreonine; by CK2 is present on T331. A Phosphoserine modification is found at S372. A Phosphoserine; by CK2 modification is found at S376. A Phosphothreonine; by CK2 modification is found at T378. Residues S394 and S397 each carry the phosphoserine modification. At S402 the chain carries Phosphoserine; by CK2. A Phosphothreonine; by CK2 modification is found at T404. At S411 the chain carries Phosphoserine. T449 is modified (phosphothreonine). S453 bears the Phosphoserine; by CK2 mark. Residue T455 is modified to Phosphothreonine; by CK2. The segment at 482 to 515 (RAHSEKDQPPFGDSDDSVEADKSSPGIHLERSQA) is disordered. S485, S495, S498, S504, S505, and S513 each carry phosphoserine. The residue at position 523 (T523) is a Phosphothreonine. The residue at position 590 (S590) is a Phosphoserine. Residue K616 forms a Glycyl lysine isopeptide (Lys-Gly) (interchain with G-Cter in SUMO1); alternate linkage. A Glycyl lysine isopeptide (Lys-Gly) (interchain with G-Cter in SUMO2); alternate cross-link involves residue K616. Disordered regions lie at residues 653–689 (DTLG…DNYG) and 780–1887 (SPPR…TKLN). A compositionally biased stretch (basic and acidic residues) spans 671 to 685 (GREREQHVGGTKDSE). Phosphoserine occurs at positions 780 and 793. K812 is subject to N6-acetyllysine. Basic and acidic residues-rich tracts occupy residues 819–844 (ETAE…ERQT), 851–862 (ELTKGKQDREQK), 868–905 (DTQR…EKQV), and 914–951 (AFER…RGEP). 2 positions are modified to phosphoserine: S955 and S998. Over residues 955 to 965 (SQDQKGQASSP) the composition is skewed to polar residues. Positions 1016–1031 (KASRIRAAEKVSRGDQ) are enriched in basic and acidic residues. S1033 carries the post-translational modification Phosphoserine. Pro residues predominate over residues 1040-1051 (PTVPEAPAPPQK). A phosphoserine mark is found at S1068 and S1086. Residues 1103 to 1113 (PKPKIRTRKSS) show a composition bias toward basic residues. The span at 1129–1156 (PSTSTAQPVTPKPTSQATRSRTNRSSVK) shows a compositional bias: polar residues. Residues 1148 to 1610 (SRTNRSSVKT…TNRSSVKTPE (463 aa)) form an interaction with the PRKDC complex region. Residue T1157 is modified to Phosphothreonine. Residues 1169–1187 (QPSTSTDQPVTSEPTSQVT) show a composition bias toward polar residues. Phosphothreonine is present on T1198. Polar residues predominate over residues 1210-1228 (QPSTSTDRPVTSEPTSQAT). The residue at position 1235 (S1235) is a Phosphoserine. Phosphothreonine is present on T1239. A compositionally biased stretch (polar residues) spans 1251–1268 (QPSTSTDQPVTSEPTYQA). Phosphothreonine occurs at positions 1280 and 1302. 2 stretches are compositionally biased toward low complexity: residues 1304–1318 (KPTS…NMSS) and 1347–1359 (TSRT…NMSS). A compositionally biased stretch (polar residues) spans 1375–1391 (PSTSTEQPVTPEPTSRA). S1399 and S1400 each carry phosphoserine. The residue at position 1402 (K1402) is an N6-acetyllysine. Position 1403 is a phosphothreonine (T1403). A Glycyl lysine isopeptide (Lys-Gly) (interchain with G-Cter in SUMO1); alternate cross-link involves residue K1413. Residue K1413 forms a Glycyl lysine isopeptide (Lys-Gly) (interchain with G-Cter in SUMO2); alternate linkage. Composition is skewed to polar residues over residues 1416 to 1444 (PSTS…SVKT), 1456 to 1475 (QPST…QATR), 1498 to 1514 (ASAS…TSRT), and 1538 to 1555 (QPST…TSRA). Phosphothreonine is present on residues T1425 and T1466. T1548 bears the Phosphothreonine mark. S1564 carries the post-translational modification Phosphoserine. 2 positions are modified to phosphothreonine: T1567 and T1589. Over residues 1579-1596 (QPSTSRNQLVTPEPTSRA) the composition is skewed to polar residues. S1604 is subject to Phosphoserine. T1608 is modified (phosphothreonine). Pro residues predominate over residues 1611-1620 (PVVPTAPEPH). A compositionally biased stretch (polar residues) spans 1624–1636 (STDQPVTPKLTSR). Phosphothreonine occurs at positions 1630, 1664, and 1671. Positions 1678–1689 (GGQSKTLRSSTV) are enriched in polar residues. A Phosphoserine modification is found at S1681. Residue T1697 is modified to Phosphothreonine. Positions 1698–1719 (PEFQSPVTTDQPISPEPITQPS) are enriched in polar residues. Residues 1698–2089 (PEFQSPVTTD…VLSPLEMSST (392 aa)) are required for nuclear localization (NLS2). S1702 and S1711 each carry phosphoserine. K1740 is covalently cross-linked (Glycyl lysine isopeptide (Lys-Gly) (interchain with G-Cter in SUMO2)). S1775 carries the post-translational modification Phosphoserine. K1790 participates in a covalent cross-link: Glycyl lysine isopeptide (Lys-Gly) (interchain with G-Cter in SUMO2). Position 1800 is a phosphothreonine (T1800). At S1820 the chain carries Phosphoserine. Residues 1823–1836 (HQKQPQRGEVSQKT) show a composition bias toward polar residues. K1840 participates in a covalent cross-link: Glycyl lysine isopeptide (Lys-Gly) (interchain with G-Cter in SUMO1); alternate. K1840 participates in a covalent cross-link: Glycyl lysine isopeptide (Lys-Gly) (interchain with G-Cter in SUMO2); alternate. Positions 1847–1857 (AEKPGKEEDVV) are enriched in basic and acidic residues. At T1858 the chain carries Phosphothreonine. BRCT domains lie at 1892–1970 (APKV…EYVV) and 1991–2082 (RERR…FVLS). An Omega-N-methylarginine modification is found at R1943.

In terms of assembly, homodimer. Interacts with H2AX, which requires phosphorylation of H2AX on 'Ser-139'. Interacts with the MRN complex, composed of MRE11, RAD50, and NBN. Interacts with CHEK2, which requires ATM-mediated phosphorylation of 'Thr-68' within the FHA domain of CHEK2. Interacts constitutively with the BRCA1-BARD1 complex, SMC1A and TP53BP1. Interacts with ATM and FANCD2, and these interactions are reduced upon DNA damage. Also interacts with the PRKDC complex, composed of XRCC6/KU70, XRCC5/KU80 and PRKDC/XRCC7. This interaction may be required for PRKDC autophosphorylation, which is essential for DNA double strand break (DSB) repair. When phosphorylated by ATM, interacts with RNF8 (via FHA domain). Interacts with CEP164. When phosphorylated, interacts with APTX (via FHA-like domain). Interacts (when phosphorylated) with TOPBP1; promoting TOPBP1 localization to DNA damage sites during mitosis. Interacts (when phosphorylated) with NBN; promoting NBN and MRN complex localization to DNA damage sites. Phosphorylated upon exposure to ionizing radiation (IR), ultraviolet radiation (UV), and hydroxyurea (HU). Phosphorylation in response to IR requires ATM, NBN, and possibly CHEK2. Also phosphorylated during the G2/M phase of the cell cycle and during activation of the mitotic spindle checkpoint. Phosphorylation at Thr-4 by ATM stabilizes and enhances homodimerization via the FHA domain. Phosphorylated at Ser-168 and Ser-196 by CK2 in response to DNA damage during mitosis, promoting interaction with TOPBP1. Phosphorylated by CK2 in response to DNA damage, promoting interaction with NBN and recruitment of the MRN complex to DNA damage sites. In terms of processing, sumoylation at Lys-1840 by PIAS4 following DNA damage promotes ubiquitin-mediated degradation. Post-translationally, ubiquitinated by RNF4, leading to proteasomal degradation; undergoes 'Lys-48'-linked polyubiquitination. In terms of tissue distribution, highly expressed in testis.

The protein resides in the nucleus. Its subcellular location is the chromosome. In terms of biological role, histone reader protein required for checkpoint-mediated cell cycle arrest in response to DNA damage within both the S phase and G2/M phases of the cell cycle. Specifically recognizes and binds histone H2AX phosphorylated at 'Ser-139', a marker of DNA damage, serving as a scaffold for the recruitment of DNA repair and signal transduction proteins to discrete foci of DNA damage sites. Also required for downstream events subsequent to the recruitment of these proteins. These include phosphorylation and activation of the ATM, CHEK1 and CHEK2 kinases, and stabilization of TP53/p53 and apoptosis. ATM and CHEK2 may also be activated independently by a parallel pathway mediated by TP53BP1. Required for chromosomal stability during mitosis by promoting recruitment of TOPBP1 to DNA double strand breaks (DSBs): TOPBP1 forms filamentous assemblies that bridge MDC1 and tether broken chromosomes during mitosis. Required for the repair of DSBs via homologous recombination by promoting recruitment of NBN component of the MRN complex to DSBs. The chain is Mediator of DNA damage checkpoint protein 1 from Homo sapiens (Human).